The sequence spans 827 residues: Spastin (827 aa).

Positions M1 to K13 are enriched in polar residues. The disordered stretch occupies residues M1 to A58. Residues M1–P79 are Cytoplasmic-facing. Residues T38–S50 are compositionally biased toward low complexity. The segment at residues V80–Y100 is an intramembrane region (helical). Residues V101–L827 lie on the Cytoplasmic side of the membrane. 2 disordered regions span residues Q127–L190 and S207–H229. Positions G129–H141 are enriched in basic residues. Residues S142 to L190 show a composition bias toward low complexity. The MIT domain maps to H231–L306. Disordered stretches follow at residues H358–S381, V398–G433, and V476–S526. A compositionally biased stretch (low complexity) spans T364–S381. Low complexity-rich tracts occupy residues V476–V486 and Q510–Q524. An ATP-binding site is contributed by G592–T599.

It belongs to the AAA ATPase family. Spastin subfamily. Homohexamer. The homohexamer is stabilized by ATP-binding. The homohexamer may adopt a ring conformation through which microtubules pass prior to being severed. Interacts with microtubules.

The protein localises to the membrane. It is found in the cytoplasm. The protein resides in the cytoskeleton. It localises to the microtubule organizing center. Its subcellular location is the centrosome. The catalysed reaction is n ATP + n H2O + a microtubule = n ADP + n phosphate + (n+1) alpha/beta tubulin heterodimers.. Its function is as follows. ATP-dependent microtubule severing protein. Microtubule severing may promote reorganization of cellular microtubule arrays and the release of microtubules from the microtubule organizing center following nucleation. The protein is Spastin (spas) of Anopheles gambiae (African malaria mosquito).